The chain runs to 415 residues: E3 ubiquitin-protein ligase RNF135 (415 aa).

An RING-type zinc finger spans residues 21–67 (CIICQGLLDWPTTLPCGHSFCLQCLKDLWVSKRAGVDSCPWACPICR). Residues 181 to 206 (TFSASQKKIQEILRDLEKIQETLQGS) are a coiled coil. Positions 228–415 (PDQRYPVSRK…LTPGNYLEIL (188 aa)) constitute a B30.2/SPRY domain.

Homodimer. Interacts (homodimer) with RIGI (double-stranded RNA-bound oligomeric form); involved in both RIGI ubiquitination, oligomerization into filaments associated with viral RNAs and the bridging of these filaments. Interacts with UBE2D3 and UBE2N; E2 ubiquitin ligases involved in RNF135-mediated ubiquitination of RIGI and activation of the RIG-I signaling pathway. Interacts with PCBP2.

The protein resides in the cytoplasm. Its subcellular location is the stress granule. The enzyme catalyses S-ubiquitinyl-[E2 ubiquitin-conjugating enzyme]-L-cysteine + [acceptor protein]-L-lysine = [E2 ubiquitin-conjugating enzyme]-L-cysteine + N(6)-ubiquitinyl-[acceptor protein]-L-lysine.. Its pathway is protein modification; protein ubiquitination. Functionally, E2-dependent E3 ubiquitin-protein ligase that functions as a RIGI coreceptor in the sensing of viral RNAs in cell cytoplasm and the activation of the antiviral innate immune response. Together with the UBE2D3, UBE2N and UB2V1 E2 ligases, catalyzes the 'Lys-63'-linked polyubiquitination of RIGI oligomerized on viral RNAs, an essential step in the activation of the RIG-I signaling pathway. Through a ubiquitin-independent parallel mechanism, which consists in bridging RIGI filaments forming on longer viral RNAs, further activates the RIG-I signaling pathway. This second mechanism that synergizes with the ubiquitin-dependent one would thereby allow an RNA length-dependent regulation of the RIG-I signaling pathway. Associated with the E2 ligase UBE2N, also constitutively synthesizes unanchored 'Lys-63'-linked polyubiquitin chains that may also activate the RIG-I signaling pathway. This is E3 ubiquitin-protein ligase RNF135 from Rattus norvegicus (Rat).